The sequence spans 420 residues: Torsin-4A-A (420 aa).

The chain crosses the membrane as a helical span at residues 130–150 (CLLLFIGIVCFQILNAIENLD). 202–209 (GPSGVGKS) lines the ATP pocket.

Belongs to the ClpA/ClpB family. Torsin subfamily.

Its subcellular location is the membrane. This is Torsin-4A-A (tor4a-a) from Xenopus laevis (African clawed frog).